Here is a 91-residue protein sequence, read N- to C-terminus: DNA-binding protein HU (91 aa).

It belongs to the bacterial histone-like protein family. In terms of assembly, homodimer.

In terms of biological role, histone-like DNA-binding protein which is capable of wrapping DNA to stabilize it, and thus to prevent its denaturation under extreme environmental conditions. The protein is DNA-binding protein HU (hup) of Streptococcus thermophilus.